A 557-amino-acid chain; its full sequence is NADH-quinone oxidoreductase subunit C/D (557 aa).

The span at 1–13 shows a compositional bias: acidic residues; it reads MSLEEQQSDDPAE. Residues 1 to 20 form a disordered region; it reads MSLEEQQSDDPAELESGVSR. The segment at 1-174 is NADH dehydrogenase I subunit C; it reads MSLEEQQSDD…ATLREHANPL (174 aa). An NADH dehydrogenase I subunit D region spans residues 184–557; that stretch reads NTMYINIGPH…LDIVLGEVDR (374 aa). K517 is covalently cross-linked (Glycyl lysine isopeptide (Lys-Gly) (interchain with G-Cter in SAMP2)).

In the N-terminal section; belongs to the complex I 30 kDa subunit family. The protein in the C-terminal section; belongs to the complex I 49 kDa subunit family. NDH-1 is composed of 13 different subunits. Subunits NuoB, CD, E, F, and G constitute the peripheral sector of the complex.

Its subcellular location is the cell membrane. The catalysed reaction is a quinone + NADH + 5 H(+)(in) = a quinol + NAD(+) + 4 H(+)(out). NDH-1 shuttles electrons from NADH, via FMN and iron-sulfur (Fe-S) centers, to quinones in the respiratory chain. Couples the redox reaction to proton translocation (for every two electrons transferred, four hydrogen ions are translocated across the cytoplasmic membrane), and thus conserves the redox energy in a proton gradient. This Haloferax volcanii (strain ATCC 29605 / DSM 3757 / JCM 8879 / NBRC 14742 / NCIMB 2012 / VKM B-1768 / DS2) (Halobacterium volcanii) protein is NADH-quinone oxidoreductase subunit C/D (nuoCD).